A 338-amino-acid polypeptide reads, in one-letter code: Nucleoid-associated protein PA14_59050 (338 aa).

Belongs to the YejK family.

The protein resides in the cytoplasm. It is found in the nucleoid. This Pseudomonas aeruginosa (strain UCBPP-PA14) protein is Nucleoid-associated protein PA14_59050.